Reading from the N-terminus, the 357-residue chain is Holliday junction branch migration complex subunit RuvB (357 aa).

Residues 1 to 15 (MAIQSDSLSSLPDSP) are compositionally biased toward low complexity. The disordered stretch occupies residues 1–30 (MAIQSDSLSSLPDSPRIVAPQPVSPNEESI). The large ATPase domain (RuvB-L) stretch occupies residues 13 to 195 (DSPRIVAPQP…FGIVSRLEFY (183 aa)). ATP contacts are provided by residues Leu34, Arg35, Gly76, Lys79, Thr80, Thr81, 142–144 (EDF), Arg185, Tyr195, and Arg232. A Mg(2+)-binding site is contributed by Thr80. The interval 196 to 266 (NTDELARIVT…AAGRALAMLD (71 aa)) is small ATPAse domain (RuvB-S). The segment at 269 to 357 (PQGLDVMDRK…SGGTGELFSK (89 aa)) is head domain (RuvB-H). 3 residues coordinate DNA: Arg305, Arg324, and Arg329.

This sequence belongs to the RuvB family. Homohexamer. Forms an RuvA(8)-RuvB(12)-Holliday junction (HJ) complex. HJ DNA is sandwiched between 2 RuvA tetramers; dsDNA enters through RuvA and exits via RuvB. An RuvB hexamer assembles on each DNA strand where it exits the tetramer. Each RuvB hexamer is contacted by two RuvA subunits (via domain III) on 2 adjacent RuvB subunits; this complex drives branch migration. In the full resolvosome a probable DNA-RuvA(4)-RuvB(12)-RuvC(2) complex forms which resolves the HJ.

It localises to the cytoplasm. It catalyses the reaction ATP + H2O = ADP + phosphate + H(+). Functionally, the RuvA-RuvB-RuvC complex processes Holliday junction (HJ) DNA during genetic recombination and DNA repair, while the RuvA-RuvB complex plays an important role in the rescue of blocked DNA replication forks via replication fork reversal (RFR). RuvA specifically binds to HJ cruciform DNA, conferring on it an open structure. The RuvB hexamer acts as an ATP-dependent pump, pulling dsDNA into and through the RuvAB complex. RuvB forms 2 homohexamers on either side of HJ DNA bound by 1 or 2 RuvA tetramers; 4 subunits per hexamer contact DNA at a time. Coordinated motions by a converter formed by DNA-disengaged RuvB subunits stimulates ATP hydrolysis and nucleotide exchange. Immobilization of the converter enables RuvB to convert the ATP-contained energy into a lever motion, pulling 2 nucleotides of DNA out of the RuvA tetramer per ATP hydrolyzed, thus driving DNA branch migration. The RuvB motors rotate together with the DNA substrate, which together with the progressing nucleotide cycle form the mechanistic basis for DNA recombination by continuous HJ branch migration. Branch migration allows RuvC to scan DNA until it finds its consensus sequence, where it cleaves and resolves cruciform DNA. The protein is Holliday junction branch migration complex subunit RuvB of Bordetella bronchiseptica (strain ATCC BAA-588 / NCTC 13252 / RB50) (Alcaligenes bronchisepticus).